The sequence spans 739 residues: Sulfate transporter (739 aa).

Residues 1–27 (MSSESKEQHNVSPRDSAEGNDSYPSGI) are disordered. Phosphoserine is present on residues Ser-12 and Ser-16. Helical transmembrane passes span 112 to 132 (VMSGLIVGILLVPQSIAYSLL) and 137 to 157 (PVYGLYTSFFASIIYFLLGTS). N-linked (GlcNAc...) asparagine glycans are attached at residues Asn-199 and Asn-205. 2 helical membrane-spanning segments follow: residues 219–239 (IMVGSTVTFIAGVYQVAMGFF) and 242–262 (GFVSVYLSDALLSGFVTGASF). An N-linked (GlcNAc...) asparagine glycan is attached at Asn-357. 4 helical membrane-spanning segments follow: residues 378-398 (LIPSVAVDAIAISIIGFAITV), 420-440 (AIGFCNIIPSFFHCFTTSAAL), 455-475 (LSGVVTALVLLLVLLVIAPLF), and 524-544 (LLSTEIGLLVGVCFSIFCVIL). Residues 568–719 (AYKNLQIKPG…YSVYEAMAFA (152 aa)) form the STAS domain.

The protein belongs to the SLC26A/SulP transporter (TC 2.A.53) family. N-glycosylated. Ubiquitously expressed.

The protein localises to the cell membrane. It is found in the apical cell membrane. The enzyme catalyses oxalate(in) + sulfate(out) = oxalate(out) + sulfate(in). The catalysed reaction is sulfate(out) + 2 chloride(in) = sulfate(in) + 2 chloride(out). It carries out the reaction oxalate(out) + 2 chloride(in) = oxalate(in) + 2 chloride(out). It catalyses the reaction bromide(in) + chloride(out) = bromide(out) + chloride(in). The enzyme catalyses nitrate(in) + chloride(out) = nitrate(out) + chloride(in). The catalysed reaction is iodide(in) + chloride(out) = iodide(out) + chloride(in). An extracellular acidic pH inhibits chloride-sulfate and chloride-oxalate exchange activity whereas an intracellular acidic pH activates chloride-sulfate exchange with no effect on chloride-oxalate exchange activity. Functionally, sulfate transporter which mediates sulfate uptake into chondrocytes in order to maintain adequate sulfation of proteoglycans which is needed for cartilage development. Mediates electroneutral anion exchange of sulfate ions for oxalate ions and of sulfate and oxalate ions for chloride ions. Mediates exchange of sulfate and oxalate ions for hydroxyl ions and of chloride ions for bromide, iodide and nitrate ions. The coupling of sulfate transport to both hydroxyl and chloride ions likely serves to ensure transport at both acidic pH when most sulfate uptake is mediated by sulfate-hydroxide exchange and alkaline pH when most sulfate uptake is mediated by sulfate-chloride exchange. Essential for chondrocyte proliferation, differentiation and cell size expansion. In Homo sapiens (Human), this protein is Sulfate transporter (SLC26A2).